Reading from the N-terminus, the 286-residue chain is Lipoyl synthase (286 aa).

Residues Cys-29, Cys-34, Cys-40, Cys-55, Cys-59, Cys-62, and Ser-265 each coordinate [4Fe-4S] cluster. The Radical SAM core domain occupies 41-254 (WGSGTATFMI…EKIAYSLGFS (214 aa)).

Belongs to the radical SAM superfamily. Lipoyl synthase family. The cofactor is [4Fe-4S] cluster.

It localises to the cytoplasm. It carries out the reaction [[Fe-S] cluster scaffold protein carrying a second [4Fe-4S](2+) cluster] + N(6)-octanoyl-L-lysyl-[protein] + 2 oxidized [2Fe-2S]-[ferredoxin] + 2 S-adenosyl-L-methionine + 4 H(+) = [[Fe-S] cluster scaffold protein] + N(6)-[(R)-dihydrolipoyl]-L-lysyl-[protein] + 4 Fe(3+) + 2 hydrogen sulfide + 2 5'-deoxyadenosine + 2 L-methionine + 2 reduced [2Fe-2S]-[ferredoxin]. Its pathway is protein modification; protein lipoylation via endogenous pathway; protein N(6)-(lipoyl)lysine from octanoyl-[acyl-carrier-protein]: step 2/2. In terms of biological role, catalyzes the radical-mediated insertion of two sulfur atoms into the C-6 and C-8 positions of the octanoyl moiety bound to the lipoyl domains of lipoate-dependent enzymes, thereby converting the octanoylated domains into lipoylated derivatives. The protein is Lipoyl synthase of Sulfolobus acidocaldarius (strain ATCC 33909 / DSM 639 / JCM 8929 / NBRC 15157 / NCIMB 11770).